A 295-amino-acid polypeptide reads, in one-letter code: Ankyrin repeat and SOCS box protein 17 (295 aa).

Residues 146-176 (SGITPLFYVAQTRQSNIFKILLQYGILEREK) form an ANK repeat. The SOCS box domain occupies 232 to 295 (LGRRPIISNW…RLQNYLNLEI (64 aa)).

It belongs to the ankyrin SOCS box (ASB) family.

Its pathway is protein modification; protein ubiquitination. In terms of biological role, may be a substrate-recognition component of a SCF-like ECS (Elongin-Cullin-SOCS-box protein) E3 ubiquitin-protein ligase complex which mediates the ubiquitination and subsequent proteasomal degradation of target proteins. The chain is Ankyrin repeat and SOCS box protein 17 (ASB17) from Macaca fascicularis (Crab-eating macaque).